Consider the following 953-residue polypeptide: Translation initiation factor IF-2 (953 aa).

Residues 53–368 (AKKAVAGTSE…PVTERKFHEL (316 aa)) form a disordered region. Composition is skewed to basic and acidic residues over residues 135–151 (FKAE…ERRK) and 162–190 (RNDR…RNRQ). Over residues 191–214 (EQGNQHRNQGQSQYNQQRQSFNQG) the composition is skewed to low complexity. Positions 236 to 266 (RSSEERFKQAKANKEALREQNKRKEQAKLED) are enriched in basic and acidic residues. Over residues 274-288 (PKPTAKAPATPAPTA) the composition is skewed to low complexity. Residues 301–318 (ARPDKERDNFDHEEDGPR) are compositionally biased toward basic and acidic residues. Over residues 332-341 (NQKNSNWNNN) the composition is skewed to low complexity. The 168-residue stretch at 455–622 (ERPPVVTIMG…TVLLVAEIQE (168 aa)) folds into the tr-type G domain. The interval 464-471 (GHVDHGKT) is G1. 464 to 471 (GHVDHGKT) is a GTP binding site. The interval 489-493 (GITQH) is G2. The tract at residues 510 to 513 (DTPG) is G3. Residues 510–514 (DTPGH) and 564–567 (NKID) contribute to the GTP site. The segment at 564–567 (NKID) is G4. Positions 600-602 (SAK) are G5.

The protein belongs to the TRAFAC class translation factor GTPase superfamily. Classic translation factor GTPase family. IF-2 subfamily.

It is found in the cytoplasm. Functionally, one of the essential components for the initiation of protein synthesis. Protects formylmethionyl-tRNA from spontaneous hydrolysis and promotes its binding to the 30S ribosomal subunits. Also involved in the hydrolysis of GTP during the formation of the 70S ribosomal complex. In Streptococcus gordonii (strain Challis / ATCC 35105 / BCRC 15272 / CH1 / DL1 / V288), this protein is Translation initiation factor IF-2.